Reading from the N-terminus, the 429-residue chain is UDP-N-acetylglucosamine 1-carboxyvinyltransferase (429 aa).

A phosphoenolpyruvate-binding site is contributed by K22 to N23. R102 is a UDP-N-acetyl-alpha-D-glucosamine binding site. C126 functions as the Proton donor in the catalytic mechanism. C126 bears the 2-(S-cysteinyl)pyruvic acid O-phosphothioketal mark. UDP-N-acetyl-alpha-D-glucosamine is bound by residues R131 to L135, D316, and I338.

This sequence belongs to the EPSP synthase family. MurA subfamily.

The protein resides in the cytoplasm. It catalyses the reaction phosphoenolpyruvate + UDP-N-acetyl-alpha-D-glucosamine = UDP-N-acetyl-3-O-(1-carboxyvinyl)-alpha-D-glucosamine + phosphate. Its pathway is cell wall biogenesis; peptidoglycan biosynthesis. Functionally, cell wall formation. Adds enolpyruvyl to UDP-N-acetylglucosamine. The polypeptide is UDP-N-acetylglucosamine 1-carboxyvinyltransferase (Methylobacterium radiotolerans (strain ATCC 27329 / DSM 1819 / JCM 2831 / NBRC 15690 / NCIMB 10815 / 0-1)).